Here is a 468-residue protein sequence, read N- to C-terminus: Siroheme synthase 3 (468 aa).

The tract at residues 1-204 (MDYLPIFCRL…GDSASANQLA (204 aa)) is precorrin-2 dehydrogenase /sirohydrochlorin ferrochelatase. Residues 22 to 23 (EV) and 43 to 44 (PE) contribute to the NAD(+) site. S128 is subject to Phosphoserine. The segment at 216-468 (GEVVLVGAGP…GAADAALASA (253 aa)) is uroporphyrinogen-III C-methyltransferase. P225 provides a ligand contact to S-adenosyl-L-methionine. The active-site Proton acceptor is D248. K270 (proton donor) is an active-site residue. Residues 301 to 303 (GGD), I306, 331 to 332 (TA), M383, and G412 contribute to the S-adenosyl-L-methionine site.

In the N-terminal section; belongs to the precorrin-2 dehydrogenase / sirohydrochlorin ferrochelatase family. The protein in the C-terminal section; belongs to the precorrin methyltransferase family.

The enzyme catalyses uroporphyrinogen III + 2 S-adenosyl-L-methionine = precorrin-2 + 2 S-adenosyl-L-homocysteine + H(+). The catalysed reaction is precorrin-2 + NAD(+) = sirohydrochlorin + NADH + 2 H(+). It carries out the reaction siroheme + 2 H(+) = sirohydrochlorin + Fe(2+). The protein operates within cofactor biosynthesis; adenosylcobalamin biosynthesis; precorrin-2 from uroporphyrinogen III: step 1/1. It participates in cofactor biosynthesis; adenosylcobalamin biosynthesis; sirohydrochlorin from precorrin-2: step 1/1. It functions in the pathway porphyrin-containing compound metabolism; siroheme biosynthesis; precorrin-2 from uroporphyrinogen III: step 1/1. Its pathway is porphyrin-containing compound metabolism; siroheme biosynthesis; siroheme from sirohydrochlorin: step 1/1. The protein operates within porphyrin-containing compound metabolism; siroheme biosynthesis; sirohydrochlorin from precorrin-2: step 1/1. Functionally, multifunctional enzyme that catalyzes the SAM-dependent methylations of uroporphyrinogen III at position C-2 and C-7 to form precorrin-2 via precorrin-1. Then it catalyzes the NAD-dependent ring dehydrogenation of precorrin-2 to yield sirohydrochlorin. Finally, it catalyzes the ferrochelation of sirohydrochlorin to yield siroheme. The sequence is that of Siroheme synthase 3 from Aeromonas hydrophila subsp. hydrophila (strain ATCC 7966 / DSM 30187 / BCRC 13018 / CCUG 14551 / JCM 1027 / KCTC 2358 / NCIMB 9240 / NCTC 8049).